A 298-amino-acid chain; its full sequence is Protease HtpX homolog (298 aa).

2 helical membrane-spanning segments follow: residues 14-34 and 39-59; these read VVLL…AGYL and YAMG…SMIF. Zn(2+) is bound at residue H143. E144 is a catalytic residue. H147 contacts Zn(2+). 2 helical membrane-spanning segments follow: residues 158–178 and 197–217; these read IAVA…RMLW and IITL…ASLI. A Zn(2+)-binding site is contributed by E226.

The protein belongs to the peptidase M48B family. It depends on Zn(2+) as a cofactor.

It localises to the cell membrane. The polypeptide is Protease HtpX homolog (Streptococcus pyogenes serotype M28 (strain MGAS6180)).